The following is a 136-amino-acid chain: Fatty acid-binding protein homolog 5 (136 aa).

A fatty acid is bound by residues arginine 111 and 131-133 (RAY).

It belongs to the calycin superfamily. Fatty-acid binding protein (FABP) family.

This is Fatty acid-binding protein homolog 5 (lbp-5) from Caenorhabditis elegans.